Reading from the N-terminus, the 207-residue chain is Large ribosomal subunit protein uL4 (207 aa).

Residues 48–85 form a disordered region; it reads THKVKNRSEVRGGGRKPWRQKGTGRARQGSIRSPQWRG. The span at 60-71 shows a compositional bias: basic residues; the sequence is GGRKPWRQKGTG.

This sequence belongs to the universal ribosomal protein uL4 family. Part of the 50S ribosomal subunit.

Functionally, one of the primary rRNA binding proteins, this protein initially binds near the 5'-end of the 23S rRNA. It is important during the early stages of 50S assembly. It makes multiple contacts with different domains of the 23S rRNA in the assembled 50S subunit and ribosome. Its function is as follows. Forms part of the polypeptide exit tunnel. This is Large ribosomal subunit protein uL4 from Bacillus subtilis (strain 168).